The sequence spans 213 residues: Peptidyl-tRNA hydrolase (213 aa).

Position 15 (Y15) interacts with tRNA. H20 serves as the catalytic Proton acceptor. 3 residues coordinate tRNA: Y66, N68, and N114. Residues 186–213 (MHAKPPRPKPPRPVTAPGAPVPPTEPSA) are disordered. Pro residues predominate over residues 196 to 213 (PRPVTAPGAPVPPTEPSA).

The protein belongs to the PTH family. Monomer.

It is found in the cytoplasm. It catalyses the reaction an N-acyl-L-alpha-aminoacyl-tRNA + H2O = an N-acyl-L-amino acid + a tRNA + H(+). In terms of biological role, hydrolyzes ribosome-free peptidyl-tRNAs (with 1 or more amino acids incorporated), which drop off the ribosome during protein synthesis, or as a result of ribosome stalling. Its function is as follows. Catalyzes the release of premature peptidyl moieties from peptidyl-tRNA molecules trapped in stalled 50S ribosomal subunits, and thus maintains levels of free tRNAs and 50S ribosomes. This Leptothrix cholodnii (strain ATCC 51168 / LMG 8142 / SP-6) (Leptothrix discophora (strain SP-6)) protein is Peptidyl-tRNA hydrolase.